Here is a 247-residue protein sequence, read N- to C-terminus: Uridylate kinase (247 aa).

16–19 (KLSG) contributes to the ATP binding site. Gly-58 lines the UMP pocket. 2 residues coordinate ATP: Gly-59 and Arg-63. Residues Asp-78 and 139–146 (TGNPFFTT) each bind UMP. Residues Thr-166, Tyr-172, and Asp-175 each coordinate ATP.

This sequence belongs to the UMP kinase family. As to quaternary structure, homohexamer.

The protein resides in the cytoplasm. It carries out the reaction UMP + ATP = UDP + ADP. It functions in the pathway pyrimidine metabolism; CTP biosynthesis via de novo pathway; UDP from UMP (UMPK route): step 1/1. With respect to regulation, inhibited by UTP. Catalyzes the reversible phosphorylation of UMP to UDP. This Xylella fastidiosa (strain 9a5c) protein is Uridylate kinase.